The chain runs to 431 residues: Histidine--tRNA ligase (431 aa).

It belongs to the class-II aminoacyl-tRNA synthetase family. As to quaternary structure, homodimer.

The protein resides in the cytoplasm. The catalysed reaction is tRNA(His) + L-histidine + ATP = L-histidyl-tRNA(His) + AMP + diphosphate + H(+). The sequence is that of Histidine--tRNA ligase from Limosilactobacillus fermentum (strain NBRC 3956 / LMG 18251) (Lactobacillus fermentum).